The primary structure comprises 511 residues: Histidine ammonia-lyase 2 (511 aa).

The segment at residues 144 to 146 is a cross-link (5-imidazolinone (Ser-Gly)); that stretch reads SSG. Serine 145 bears the 2,3-didehydroalanine (Ser) mark.

This sequence belongs to the PAL/histidase family. In terms of processing, contains an active site 4-methylidene-imidazol-5-one (MIO), which is formed autocatalytically by cyclization and dehydration of residues Ser-Ser-Gly.

It localises to the cytoplasm. The enzyme catalyses L-histidine = trans-urocanate + NH4(+). It participates in amino-acid degradation; L-histidine degradation into L-glutamate; N-formimidoyl-L-glutamate from L-histidine: step 1/3. The chain is Histidine ammonia-lyase 2 (hutH2) from Fusobacterium nucleatum subsp. nucleatum (strain ATCC 25586 / DSM 15643 / BCRC 10681 / CIP 101130 / JCM 8532 / KCTC 2640 / LMG 13131 / VPI 4355).